Consider the following 499-residue polypeptide: Lysine--tRNA ligase (499 aa).

Positions 408 and 415 each coordinate Mg(2+).

This sequence belongs to the class-II aminoacyl-tRNA synthetase family. As to quaternary structure, homodimer. Mg(2+) serves as cofactor.

Its subcellular location is the cytoplasm. The catalysed reaction is tRNA(Lys) + L-lysine + ATP = L-lysyl-tRNA(Lys) + AMP + diphosphate. The polypeptide is Lysine--tRNA ligase (Bacillus mycoides (strain KBAB4) (Bacillus weihenstephanensis)).